The chain runs to 548 residues: Chaperonin GroEL (548 aa).

Residues 29-32, Lys50, 86-90, Gly414, 478-480, and Asp494 contribute to the ATP site; these read TMGP, DGTTT, and NAA.

The protein belongs to the chaperonin (HSP60) family. As to quaternary structure, forms a cylinder of 14 subunits composed of two heptameric rings stacked back-to-back. Interacts with the co-chaperonin GroES.

It is found in the cytoplasm. It carries out the reaction ATP + H2O + a folded polypeptide = ADP + phosphate + an unfolded polypeptide.. Together with its co-chaperonin GroES, plays an essential role in assisting protein folding. The GroEL-GroES system forms a nano-cage that allows encapsulation of the non-native substrate proteins and provides a physical environment optimized to promote and accelerate protein folding. In terms of biological role, may play a protective role against the defense mechanisms generated by the infected macrophages. The polypeptide is Chaperonin GroEL (Legionella pneumophila subsp. pneumophila (strain Philadelphia 1 / ATCC 33152 / DSM 7513)).